A 225-amino-acid polypeptide reads, in one-letter code: Chalcone--flavanone isomerase 3 (225 aa).

Substrate is bound by residues threonine 51, asparagine 116, and threonine 193.

This sequence belongs to the chalcone isomerase family.

It catalyses the reaction a chalcone = a flavanone.. Its pathway is secondary metabolite biosynthesis; flavonoid biosynthesis. In terms of biological role, catalyzes the intramolecular cyclization of bicyclic chalcones into tricyclic (S)-flavanones. Responsible for the isomerization of 4,2',4',6'-tetrahydroxychalcone (also termed chalcone) into naringenin. The protein is Chalcone--flavanone isomerase 3 (CHI3) of Lotus japonicus (Lotus corniculatus var. japonicus).